Consider the following 298-residue polypeptide: Thymidylate synthase (298 aa).

DUMP-binding positions include arginine 25 and 159–160 (RR). Cysteine 179 serves as the catalytic Nucleophile. DUMP-binding positions include 200-203 (RSCD), asparagine 211, and 241-243 (HLY). Aspartate 203 is a binding site for (6R)-5,10-methylene-5,6,7,8-tetrahydrofolate. Residue alanine 297 participates in (6R)-5,10-methylene-5,6,7,8-tetrahydrofolate binding.

It belongs to the thymidylate synthase family. Bacterial-type ThyA subfamily. As to quaternary structure, homodimer.

It localises to the cytoplasm. The catalysed reaction is dUMP + (6R)-5,10-methylene-5,6,7,8-tetrahydrofolate = 7,8-dihydrofolate + dTMP. Its pathway is pyrimidine metabolism; dTTP biosynthesis. Functionally, catalyzes the reductive methylation of 2'-deoxyuridine-5'-monophosphate (dUMP) to 2'-deoxythymidine-5'-monophosphate (dTMP) while utilizing 5,10-methylenetetrahydrofolate (mTHF) as the methyl donor and reductant in the reaction, yielding dihydrofolate (DHF) as a by-product. This enzymatic reaction provides an intracellular de novo source of dTMP, an essential precursor for DNA biosynthesis. This chain is Thymidylate synthase, found in Rhodopseudomonas palustris (strain BisA53).